Consider the following 479-residue polypeptide: Ribosomal RNA small subunit methyltransferase F (479 aa).

Residues alanine 125–lysine 131, glutamate 149, aspartate 176, and aspartate 194 contribute to the S-adenosyl-L-methionine site. The active-site Nucleophile is the cysteine 247.

This sequence belongs to the class I-like SAM-binding methyltransferase superfamily. RsmB/NOP family.

Its subcellular location is the cytoplasm. The enzyme catalyses cytidine(1407) in 16S rRNA + S-adenosyl-L-methionine = 5-methylcytidine(1407) in 16S rRNA + S-adenosyl-L-homocysteine + H(+). Its function is as follows. Specifically methylates the cytosine at position 1407 (m5C1407) of 16S rRNA. This chain is Ribosomal RNA small subunit methyltransferase F, found in Citrobacter koseri (strain ATCC BAA-895 / CDC 4225-83 / SGSC4696).